We begin with the raw amino-acid sequence, 131 residues long: Small ribosomal subunit protein uS8 (131 aa).

This sequence belongs to the universal ribosomal protein uS8 family. In terms of assembly, part of the 30S ribosomal subunit. Contacts proteins S5 and S12.

Functionally, one of the primary rRNA binding proteins, it binds directly to 16S rRNA central domain where it helps coordinate assembly of the platform of the 30S subunit. The polypeptide is Small ribosomal subunit protein uS8 (Burkholderia mallei (strain NCTC 10247)).